Here is a 447-residue protein sequence, read N- to C-terminus: Kynurenine 3-monooxygenase (447 aa).

Belongs to the aromatic-ring hydroxylase family. KMO subfamily. FAD serves as cofactor.

The enzyme catalyses L-kynurenine + NADPH + O2 + H(+) = 3-hydroxy-L-kynurenine + NADP(+) + H2O. It participates in cofactor biosynthesis; NAD(+) biosynthesis; quinolinate from L-kynurenine: step 1/3. In terms of biological role, catalyzes the hydroxylation of L-kynurenine (L-Kyn) to form 3-hydroxy-L-kynurenine (L-3OHKyn). Required for synthesis of quinolinic acid. The chain is Kynurenine 3-monooxygenase from Christiangramia forsetii (strain DSM 17595 / CGMCC 1.15422 / KT0803) (Gramella forsetii).